Reading from the N-terminus, the 78-residue chain is NAD(P)H-quinone oxidoreductase subunit O (78 aa).

Belongs to the complex I NdhO subunit family. As to quaternary structure, NDH-1 can be composed of about 15 different subunits; different subcomplexes with different compositions have been identified which probably have different functions.

It localises to the cellular thylakoid membrane. The catalysed reaction is a plastoquinone + NADH + (n+1) H(+)(in) = a plastoquinol + NAD(+) + n H(+)(out). The enzyme catalyses a plastoquinone + NADPH + (n+1) H(+)(in) = a plastoquinol + NADP(+) + n H(+)(out). In terms of biological role, NDH-1 shuttles electrons from an unknown electron donor, via FMN and iron-sulfur (Fe-S) centers, to quinones in the respiratory and/or the photosynthetic chain. The immediate electron acceptor for the enzyme in this species is believed to be plastoquinone. Couples the redox reaction to proton translocation, and thus conserves the redox energy in a proton gradient. Cyanobacterial NDH-1 also plays a role in inorganic carbon-concentration. This chain is NAD(P)H-quinone oxidoreductase subunit O, found in Prochlorococcus marinus (strain MIT 9301).